The sequence spans 297 residues: Calponin-1 (297 aa).

Residues histidine 28–alanine 131 enclose the Calponin-homology (CH) domain. 3 Calponin-like repeats span residues isoleucine 164–tyrosine 189, isoleucine 204–phenylalanine 229, and valine 243–tyrosine 268. The residue at position 170 (threonine 170) is a Phosphothreonine; by ROCK2. Phosphoserine; by ROCK2 is present on serine 175. Phosphothreonine; by ROCK2 occurs at positions 180 and 184. Threonine 259 carries the phosphothreonine; by ROCK2 modification.

It belongs to the calponin family.

In terms of biological role, thin filament-associated protein that is implicated in the regulation and modulation of smooth muscle contraction. It is capable of binding to actin, calmodulin and tropomyosin. The interaction of calponin with actin inhibits the actomyosin Mg-ATPase activity. This Bos taurus (Bovine) protein is Calponin-1 (CNN1).